A 568-amino-acid chain; its full sequence is Urease subunit alpha (568 aa).

The region spanning 130 to 568 (GGIDTHIHFI…LPMAQRYFLF (439 aa)) is the Urease domain. Residues His-135, His-137, and Lys-218 each contribute to the Ni(2+) site. The residue at position 218 (Lys-218) is an N6-carboxylysine. His-220 contacts substrate. His-247 and His-273 together coordinate Ni(2+). His-321 (proton donor) is an active-site residue. Residue Asp-361 coordinates Ni(2+).

Belongs to the metallo-dependent hydrolases superfamily. Urease alpha subunit family. As to quaternary structure, heterotrimer of UreA (gamma), UreB (beta) and UreC (alpha) subunits. Three heterotrimers associate to form the active enzyme. Ni cation serves as cofactor. Post-translationally, carboxylation allows a single lysine to coordinate two nickel ions.

The protein resides in the cytoplasm. It carries out the reaction urea + 2 H2O + H(+) = hydrogencarbonate + 2 NH4(+). It functions in the pathway nitrogen metabolism; urea degradation; CO(2) and NH(3) from urea (urease route): step 1/1. In Burkholderia pseudomallei (strain K96243), this protein is Urease subunit alpha.